Consider the following 310-residue polypeptide: uncharacterized protein (310 aa).

The segment covering 1–11 (MKVKSILKHSR) has biased composition (basic residues). Disordered stretches follow at residues 1-227 (MKVK…SDHA) and 242-310 (AMEE…NENE). The segment covering 12–50 (MSSPSLETDSMESGQQQNMVSSTPSIDMNESDCSGTGTP) has biased composition (polar residues). Residues 51-80 (SEERIRRLRWDEENLSKAEQQKSAKMKITE) are compositionally biased toward basic and acidic residues. A compositionally biased stretch (acidic residues) spans 91–105 (PDDEVPEINLDETDS). Residues 110 to 121 (TAGTLGDTLGTL) show a composition bias toward low complexity. Basic and acidic residues-rich tracts occupy residues 126 to 150 (VSKD…KKEP) and 182 to 195 (LPSK…ETKP). The segment covering 242–253 (AMEEEALSEAEE) has biased composition (acidic residues). A compositionally biased stretch (basic and acidic residues) spans 254–265 (NIPKKKPDFNEL). Phosphoserine is present on serine 285. Polar residues predominate over residues 297–310 (DSGSASDVNMNENE).

This is an uncharacterized protein from Schizosaccharomyces pombe (strain 972 / ATCC 24843) (Fission yeast).